The sequence spans 412 residues: GATOR complex protein NPRL2 (412 aa).

The protein belongs to the NPR2 family. Component of the GATOR complex consisting of mio, Nup44A/Seh1, Im11, Nplr3, Nplr2, Wdr24, Wdr59 and Sec13. Within the GATOR complex, probable component of the GATOR1 subcomplex which is likely composed of Iml1, Nplr2 and Nplr3. Interacts with Nprl3.

It localises to the cytoplasm. The protein resides in the lysosome. Its function is as follows. An essential component of the GATOR subcomplex GATOR1 which functions as an inhibitor of the amino acid-sensing branch of the TORC1 signaling pathway. The two GATOR subcomplexes, GATOR1 and GATOR2, regulate the TORC1 pathway in order to mediate metabolic homeostasis, female gametogenesis and the response to amino acid limitation and complete starvation. The function of GATOR1 in negatively regulating the TORC1 pathway is essential for maintaining baseline levels of TORC1 activity under nutrient rich conditions, and for promoting survival during amino acid or complete starvation by inhibiting TORC1-dependent cell growth and promoting catabolic metabolism and autophagy. In addition, this inhibition of TORC1 is necessary to maintain female fertility under normal conditions and during periods of nutrient stress. GATOR1 and GATOR2 act at different stages of oogenesis to regulate TORC1 in order to control meiotic entry and promote oocyte growth and development. After exactly four mitotic cyst divisions, the GATOR1 complex members (Iml1, Nprl2 and Nprl3) down-regulate TORC1 to slow cellular metabolism and promote the mitotic/meiotic transition. At later stages of oogenesis, the mio and Nup44A components of the GATOR2 complex inhibit GATOR1 and thus activate TORC1 to promote meiotic progression, and drive oocyte growth and development. This Drosophila melanogaster (Fruit fly) protein is GATOR complex protein NPRL2.